The following is an 87-amino-acid chain: Small ribosomal subunit protein bS20 (87 aa).

Belongs to the bacterial ribosomal protein bS20 family.

Binds directly to 16S ribosomal RNA. In Geobacter sulfurreducens (strain ATCC 51573 / DSM 12127 / PCA), this protein is Small ribosomal subunit protein bS20.